Here is a 78-residue protein sequence, read N- to C-terminus: U-scoloptoxin(15)-Ssm2a (78 aa).

Residues 1 to 23 (MEKKIIFLCFFVSLLTLPEFISS) form the signal peptide. An important for inhibition of KCNQ4 region spans residues 34–37 (PEKK). 2 disulfides stabilise this stretch: C44-C70 and C48-C72.

The protein belongs to the SLPTX(15) family. As to expression, expressed by the venom gland.

Its subcellular location is the secreted. This chain is U-scoloptoxin(15)-Ssm2a, found in Scolopendra mutilans (Chinese red-headed centipede).